Here is a 158-residue protein sequence, read N- to C-terminus: NAD(P)H-quinone oxidoreductase subunit J, chloroplastic (158 aa).

Belongs to the complex I 30 kDa subunit family. In terms of assembly, NDH is composed of at least 16 different subunits, 5 of which are encoded in the nucleus.

The protein resides in the plastid. It is found in the chloroplast thylakoid membrane. The catalysed reaction is a plastoquinone + NADH + (n+1) H(+)(in) = a plastoquinol + NAD(+) + n H(+)(out). It catalyses the reaction a plastoquinone + NADPH + (n+1) H(+)(in) = a plastoquinol + NADP(+) + n H(+)(out). In terms of biological role, NDH shuttles electrons from NAD(P)H:plastoquinone, via FMN and iron-sulfur (Fe-S) centers, to quinones in the photosynthetic chain and possibly in a chloroplast respiratory chain. The immediate electron acceptor for the enzyme in this species is believed to be plastoquinone. Couples the redox reaction to proton translocation, and thus conserves the redox energy in a proton gradient. This chain is NAD(P)H-quinone oxidoreductase subunit J, chloroplastic, found in Vitis vinifera (Grape).